The following is a 383-amino-acid chain: Meiotic recombination protein SPO11-2 (383 aa).

Positions 24 to 167 (LLPHEARARI…LGIMASSRGL (144 aa)) constitute a Topo IIA-type catalytic domain. The active-site O-(5'-phospho-DNA)-tyrosine intermediate is Tyr-124. Mg(2+)-binding residues include Glu-217 and Asp-270.

The protein belongs to the TOP6A family. In terms of assembly, heterotetramer of 2 SPO11 (SPO11-1 and/or SPO11-2) and 2 MTOPVIB chains. Interacts with MTOPVIB. May form a heterodimer with SPO11-1. Interacts with PRD1. Does not interact with TOP6B. Requires Mg(2+) as cofactor. Very low expression in flowers and shoots.

It localises to the nucleus. The enzyme catalyses ATP-dependent breakage, passage and rejoining of double-stranded DNA.. Functionally, component of a topoisomerase 6 complex specifically required for meiotic recombination. Together with MTOPVIB, mediates DNA cleavage that forms the double-strand breaks (DSB) that initiate meiotic recombination. The complex promotes relaxation of negative and positive supercoiled DNA and DNA decatenation through cleavage and ligation cycles. The chain is Meiotic recombination protein SPO11-2 (SPO11-2) from Arabidopsis thaliana (Mouse-ear cress).